Here is a 359-residue protein sequence, read N- to C-terminus: MAARVCCQLDPARDVLCLRPVGAESRGRPVSRPFGPHPSPSSSAVPADHGAHLSLRGLPVCAFSSAGPCALRFTSARRMETTVNADQVLPKVLHKRTLGLSAMSTSDLEAYFKDCLFKDWEDLGEEIRLMIFVLGGCRHKLVCSPAPCNFFHLCLIISCSCPTVHASKLCLGWLWGMDIDPYKEFGASVELLSFLPSDFFPSIRDLLDTASALYREALESPEHCSPHHTALRQAILCWGELMNLATWVGSNLEDPASRELVVSYVNVNMGLKIRQLLWFHISCLTFGRETVLEYLVSFGVWIRTPPAYRPPNAPILSTLPETTVVRRRGRSPRRRTPSPRRRRSESPRRRRSQSRESQC.

2 disordered regions span residues 25 to 48 and 312 to 359; these read SRGRPVSRPFGPHPSPSSSAVPAD and NAPI…ESQC. The span at 325–352 shows a compositional bias: basic residues; it reads VRRRGRSPRRRTPSPRRRRSESPRRRRS.

This chain is Putative X-Core fused protein, found in Homo sapiens (Human).